A 150-amino-acid polypeptide reads, in one-letter code: Anthrone oxygenase gedH (150 aa).

A run of 4 helical transmembrane segments spans residues 1 to 21, 41 to 61, 73 to 93, and 128 to 148; these read MANPAVGAMMGLSLVAVPVFL, GHKLMPTIAVATCALHGWVAA, PVLAAVTTITMVPFTWVCMVS, and LFPLAGAIVACQTLLKELVGG.

Belongs to the anthrone oxygenase family.

It is found in the membrane. It carries out the reaction emodin anthrone + O2 = emodin + H2O + H(+). It functions in the pathway secondary metabolite biosynthesis. Anthrone oxygenase; part of the gene cluster that mediates the biosynthesis of geodin, an intermediate in the biosynthesis of other natural products. The pathway begins with the synthesis of atrochrysone thioester by the polyketide synthase (PKS) gedC. The atrochrysone carboxyl ACP thioesterase gedB then breaks the thioester bond and releases the atrochrysone carboxylic acid from gedC. The atrochrysone carboxylic acid is then converted to atrochrysone which is further transformed into emodin anthrone. The next step is performed by the emodin anthrone oxygenase gedH that catalyzes the oxidation of emodinanthrone to emodin. Emodin O-methyltransferase encoded probably by gedA then catalyzes methylation of the 8-hydroxy group of emodin to form questin. Ring cleavage of questin by questin oxidase gedK leads to desmethylsulochrin via several intermediates including questin epoxide. Another methylation step probably catalyzed by methyltransferase gedG leads to the formation of sulochrin which is further converted to dihydrogeodin by the sulochrin halogenase gedL. Finally, the dihydrogeodin oxidase gedJ catalyzes the stereospecific phenol oxidative coupling reaction converting dihydrogeodin to geodin. In Aspergillus terreus (strain NIH 2624 / FGSC A1156), this protein is Anthrone oxygenase gedH.